A 336-amino-acid chain; its full sequence is Foldase protein PrsA (336 aa).

Positions 1–22 (MKSAKKLLSVLCLGIFILTFTA) are cleaved as a signal peptide. Cys-23 carries the N-palmitoyl cysteine lipid modification. A lipid anchor (S-diacylglycerol cysteine) is attached at Cys-23. Residues 194 to 286 (PNTMNVSHIL…WGYHIIKVNS (93 aa)) form the PpiC domain.

Belongs to the PrsA family.

It localises to the cell membrane. It carries out the reaction [protein]-peptidylproline (omega=180) = [protein]-peptidylproline (omega=0). Plays a major role in protein secretion by helping the post-translocational extracellular folding of several secreted proteins. The protein is Foldase protein PrsA of Clostridium botulinum (strain ATCC 19397 / Type A).